Here is a 348-residue protein sequence, read N- to C-terminus: Bombesin receptor-activated protein C6orf89 homolog (348 aa).

The Cytoplasmic segment spans residues 1-58; the sequence is MDLAANEISIYDKLSETVDLVRQTGHQCGMSEKAIEKFIRQLLEKNEPQRGPPQYPLL. Residues 59 to 79 traverse the membrane as a helical segment; sequence IAMYKVLLTLGLILFTAYFVI. Residues 80–348 lie on the Extracellular side of the membrane; sequence QPFSSLAPEP…ICDGTTLSEL (269 aa).

In terms of assembly, homodimer. Interacts with BRS3. Interacts (via N-terminus) with SIN3B. In terms of processing, glycosylated.

Its subcellular location is the golgi apparatus membrane. The protein localises to the cytoplasm. In terms of biological role, exhibits histone deacetylase (HDAC) enhancer properties. May play a role in cell cycle progression and wound repair of bronchial epithelial cells. The sequence is that of Bombesin receptor-activated protein C6orf89 homolog from Rattus norvegicus (Rat).